Reading from the N-terminus, the 353-residue chain is DNA integrity scanning protein DisA (353 aa).

The region spanning 6–144 (DKELMNILKI…GGIKYVLRDS (139 aa)) is the DAC domain. Residues glycine 73, leucine 91, and 104–108 (TRHRT) contribute to the ATP site.

The protein belongs to the DisA family. As to quaternary structure, homooctamer. Mg(2+) is required as a cofactor.

It catalyses the reaction 2 ATP = 3',3'-c-di-AMP + 2 diphosphate. Its function is as follows. Participates in a DNA-damage check-point that is active prior to asymmetric division when DNA is damaged. DisA forms globular foci that rapidly scan along the chromosomes during sporulation, searching for lesions. When a lesion is present, DisA pauses at the lesion site. This triggers a cellular response that culminates in a temporary block in sporulation initiation. In terms of biological role, also has diadenylate cyclase activity, catalyzing the condensation of 2 ATP molecules into cyclic di-AMP (c-di-AMP). c-di-AMP acts as a signaling molecule that couples DNA integrity with progression of sporulation. The rise in c-di-AMP level generated by DisA while scanning the chromosome, operates as a positive signal that advances sporulation; upon encountering a lesion, the DisA focus arrests at the damaged site and halts c-di-AMP synthesis. This chain is DNA integrity scanning protein DisA, found in Clostridium botulinum (strain Loch Maree / Type A3).